The primary structure comprises 235 residues: MTDLTEKNTALEEEKIESAVENQQKSIWKEIFAQGIWKNNPAVVQLLGLCPLLAVSSTATNALGLGLATMLVLTCTNTVISLFRQYIPKEIRIPIYVMIIATTVTAVQLLMNAYTYTLYQSLGIFIPLIVTNCIIIGRAEAFASKNSLLHSIWDGFSMGLGMALSLTILGALREIIGQGTIFEGIENLFGEQAKFLTHHIYHTDSSFLLFILPPGAFIGLGLLLAIKNRIDNIKK.

The next 5 helical transmembrane spans lie at 63–83 (LGLG…ISLF), 93–113 (IPIY…LMNA), 117–137 (TLYQ…IIIG), 152–172 (IWDG…LGAL), and 206–226 (SFLL…LLAI).

The protein belongs to the NqrDE/RnfAE family. In terms of assembly, the complex is composed of six subunits: RnfA, RnfB, RnfC, RnfD, RnfE and RnfG.

The protein resides in the cell inner membrane. Functionally, part of a membrane-bound complex that couples electron transfer with translocation of ions across the membrane. This chain is Ion-translocating oxidoreductase complex subunit E, found in Haemophilus influenzae (strain ATCC 51907 / DSM 11121 / KW20 / Rd).